The following is a 291-amino-acid chain: Lipoyl synthase (291 aa).

[4Fe-4S] cluster is bound by residues cysteine 36, cysteine 41, cysteine 47, cysteine 62, cysteine 66, cysteine 69, and serine 275. The 217-residue stretch at phenylalanine 48 to lysine 264 folds into the Radical SAM core domain.

It belongs to the radical SAM superfamily. Lipoyl synthase family. [4Fe-4S] cluster serves as cofactor.

It localises to the cytoplasm. It carries out the reaction [[Fe-S] cluster scaffold protein carrying a second [4Fe-4S](2+) cluster] + N(6)-octanoyl-L-lysyl-[protein] + 2 oxidized [2Fe-2S]-[ferredoxin] + 2 S-adenosyl-L-methionine + 4 H(+) = [[Fe-S] cluster scaffold protein] + N(6)-[(R)-dihydrolipoyl]-L-lysyl-[protein] + 4 Fe(3+) + 2 hydrogen sulfide + 2 5'-deoxyadenosine + 2 L-methionine + 2 reduced [2Fe-2S]-[ferredoxin]. It functions in the pathway protein modification; protein lipoylation via endogenous pathway; protein N(6)-(lipoyl)lysine from octanoyl-[acyl-carrier-protein]: step 2/2. In terms of biological role, catalyzes the radical-mediated insertion of two sulfur atoms into the C-6 and C-8 positions of the octanoyl moiety bound to the lipoyl domains of lipoate-dependent enzymes, thereby converting the octanoylated domains into lipoylated derivatives. The chain is Lipoyl synthase from Caldicellulosiruptor bescii (strain ATCC BAA-1888 / DSM 6725 / KCTC 15123 / Z-1320) (Anaerocellum thermophilum).